A 283-amino-acid polypeptide reads, in one-letter code: Nickel/cobalt efflux system RcnA (283 aa).

The Periplasmic portion of the chain corresponds to Met1 to Asn12. Residues Ala13 to His33 traverse the membrane as a helical segment. Over Ser34–Gly56 the chain is Cytoplasmic. Residues Leu57–Ile77 form a helical membrane-spanning segment. Residues Ser78–Ala86 are Periplasmic-facing. Residues Glu87–Trp107 traverse the membrane as a helical segment. At Arg108–Ile184 the chain is on the cytoplasmic side. The segment at Asp127–His162 is disordered. Composition is skewed to basic and acidic residues over residues Glu129–His144 and Glu151–His162. The chain crosses the membrane as a helical span at residues Leu185 to Ile205. Over Cys206–Leu218 the chain is Periplasmic. The helical transmembrane segment at Val219 to Ile239 threads the bilayer. The Cytoplasmic portion of the chain corresponds to Ser240 to Tyr260. The helical transmembrane segment at Phe261–Ile281 threads the bilayer. The Periplasmic segment spans residues Met282 to Arg283.

Belongs to the NiCoT transporter (TC 2.A.52) family. RcnA subfamily.

It is found in the cell inner membrane. In terms of biological role, efflux system for nickel and cobalt. This Escherichia coli O157:H7 protein is Nickel/cobalt efflux system RcnA (rcnA).